The primary structure comprises 417 residues: Imidazolonepropionase (417 aa).

Positions 77 and 79 each coordinate Fe(3+). His77 and His79 together coordinate Zn(2+). Positions 86, 149, and 182 each coordinate 4-imidazolone-5-propanoate. An N-formimidoyl-L-glutamate-binding site is contributed by Tyr149. His247 serves as a coordination point for Fe(3+). Position 247 (His247) interacts with Zn(2+). 4-imidazolone-5-propanoate is bound at residue Gln250. Residue Asp322 participates in Fe(3+) binding. Position 322 (Asp322) interacts with Zn(2+). N-formimidoyl-L-glutamate-binding residues include Asn324 and Gly326. Thr327 contacts 4-imidazolone-5-propanoate.

It belongs to the metallo-dependent hydrolases superfamily. HutI family. The cofactor is Zn(2+). Fe(3+) is required as a cofactor.

It localises to the cytoplasm. The catalysed reaction is 4-imidazolone-5-propanoate + H2O = N-formimidoyl-L-glutamate. Its pathway is amino-acid degradation; L-histidine degradation into L-glutamate; N-formimidoyl-L-glutamate from L-histidine: step 3/3. Its function is as follows. Catalyzes the hydrolytic cleavage of the carbon-nitrogen bond in imidazolone-5-propanoate to yield N-formimidoyl-L-glutamate. It is the third step in the universal histidine degradation pathway. The protein is Imidazolonepropionase of Cupriavidus necator (strain ATCC 17699 / DSM 428 / KCTC 22496 / NCIMB 10442 / H16 / Stanier 337) (Ralstonia eutropha).